Here is a 118-residue protein sequence, read N- to C-terminus: Ribosome-binding factor A (118 aa).

This sequence belongs to the RbfA family. As to quaternary structure, monomer. Binds 30S ribosomal subunits, but not 50S ribosomal subunits or 70S ribosomes.

It localises to the cytoplasm. Functionally, one of several proteins that assist in the late maturation steps of the functional core of the 30S ribosomal subunit. Associates with free 30S ribosomal subunits (but not with 30S subunits that are part of 70S ribosomes or polysomes). Required for efficient processing of 16S rRNA. May interact with the 5'-terminal helix region of 16S rRNA. This is Ribosome-binding factor A from Geobacter metallireducens (strain ATCC 53774 / DSM 7210 / GS-15).